The primary structure comprises 199 residues: Peptidyl-tRNA hydrolase (199 aa).

Tyrosine 18 is a tRNA binding site. The active-site Proton acceptor is the histidine 23. Residues tyrosine 72, asparagine 74, and asparagine 120 each contribute to the tRNA site.

The protein belongs to the PTH family. In terms of assembly, monomer.

It localises to the cytoplasm. The catalysed reaction is an N-acyl-L-alpha-aminoacyl-tRNA + H2O = an N-acyl-L-amino acid + a tRNA + H(+). In terms of biological role, hydrolyzes ribosome-free peptidyl-tRNAs (with 1 or more amino acids incorporated), which drop off the ribosome during protein synthesis, or as a result of ribosome stalling. Functionally, catalyzes the release of premature peptidyl moieties from peptidyl-tRNA molecules trapped in stalled 50S ribosomal subunits, and thus maintains levels of free tRNAs and 50S ribosomes. The sequence is that of Peptidyl-tRNA hydrolase from Bifidobacterium animalis subsp. lactis (strain AD011).